The sequence spans 309 residues: Type II methyltransferase M.HindIII (309 aa).

Belongs to the N(4)/N(6)-methyltransferase family.

The catalysed reaction is a 2'-deoxyadenosine in DNA + S-adenosyl-L-methionine = an N(6)-methyl-2'-deoxyadenosine in DNA + S-adenosyl-L-homocysteine + H(+). Functionally, a beta subtype methylase that recognizes the double-stranded sequence 5'-AAGCTT-3', methylates A-1 on both strands, and protects the DNA from cleavage by the HindIII endonuclease. The chain is Type II methyltransferase M.HindIII from Haemophilus influenzae (strain ATCC 51907 / DSM 11121 / KW20 / Rd).